The chain runs to 177 residues: Ubiquinol-cytochrome c reductase iron-sulfur subunit (177 aa).

The chain crosses the membrane as a helical span at residues 18 to 38 (MVLTASSVAAIGAVCTLWPLV). Residues 88–175 (ARAVKMSELI…YTFISDKKIR (88 aa)) form the Rieske domain. The [2Fe-2S] cluster site is built by cysteine 120, histidine 122, cysteine 139, and histidine 142. Cysteine 125 and cysteine 141 are disulfide-bonded.

Belongs to the Rieske iron-sulfur protein family. In terms of assembly, the main subunits of complex b-c1 are: cytochrome b, cytochrome c1 and the Rieske protein. The cofactor is [2Fe-2S] cluster.

Its subcellular location is the cell membrane. It catalyses the reaction a quinol + 2 Fe(III)-[cytochrome c](out) = a quinone + 2 Fe(II)-[cytochrome c](out) + 2 H(+)(out). In terms of biological role, component of the ubiquinol-cytochrome c reductase complex (complex III or cytochrome b-c1 complex), which is a respiratory chain that generates an electrochemical potential coupled to ATP synthesis. In Rickettsia conorii (strain ATCC VR-613 / Malish 7), this protein is Ubiquinol-cytochrome c reductase iron-sulfur subunit (petA).